Here is a 428-residue protein sequence, read N- to C-terminus: Protein CANDIDATE G-PROTEIN COUPLED RECEPTOR 6 (428 aa).

Positions 1-22 (MTILPFLAAVFVLQLLSTLTVA) are cleaved as a signal peptide. Residues Asn31, Asn89, and Asn157 are each glycosylated (N-linked (GlcNAc...) asparagine). A run of 7 helical transmembrane segments spans residues 173-193 (LYLV…CFCW), 202-222 (IHLL…CAAV), 238-258 (IVFY…IVLI), 276-296 (LLVI…VIGE), 310-330 (IFFL…VWSM), 356-376 (FYVL…VMKM), and 385-405 (VSNA…FYMF).

It belongs to the LU7TM family.

It is found in the membrane. G-protein coupled receptor. Plays a role in plants and microbes interactions. The polypeptide is Protein CANDIDATE G-PROTEIN COUPLED RECEPTOR 6 (Arabidopsis thaliana (Mouse-ear cress)).